We begin with the raw amino-acid sequence, 312 residues long: Non-structural protein 12A (312 aa).

The segment covering 1–23 (MFKSGSGSLKRSGSISSVKSFSG) has biased composition (low complexity). Disordered regions lie at residues 1–37 (MFKS…RGSV), 62–99 (FVPE…QNAD), and 111–161 (ESSK…GTGD). Residues 63–77 (VPEKTKSEGNLKDKS) show a composition bias toward basic and acidic residues. The span at 78–98 (SVITGNFGSSGPINAHTNQNA) shows a compositional bias: polar residues. The segment covering 122–134 (DARHTATDSRLSQ) has biased composition (basic and acidic residues).

Belongs to the phytoreovirus non-structural protein Pns12A family.

It localises to the host cytoplasm. Its function is as follows. Constituent of viral factories. Binds to ssRNA and dsRNA. The protein is Non-structural protein 12A of Alopecurus aequalis (Barnyard grass).